Reading from the N-terminus, the 321-residue chain is Lipoyl synthase (321 aa).

7 residues coordinate [4Fe-4S] cluster: Cys68, Cys73, Cys79, Cys94, Cys98, Cys101, and Ser308. The 218-residue stretch at 80–297 (FNHGTATFMI…KAEAMAMGFT (218 aa)) folds into the Radical SAM core domain.

Belongs to the radical SAM superfamily. Lipoyl synthase family. Requires [4Fe-4S] cluster as cofactor.

The protein resides in the cytoplasm. The catalysed reaction is [[Fe-S] cluster scaffold protein carrying a second [4Fe-4S](2+) cluster] + N(6)-octanoyl-L-lysyl-[protein] + 2 oxidized [2Fe-2S]-[ferredoxin] + 2 S-adenosyl-L-methionine + 4 H(+) = [[Fe-S] cluster scaffold protein] + N(6)-[(R)-dihydrolipoyl]-L-lysyl-[protein] + 4 Fe(3+) + 2 hydrogen sulfide + 2 5'-deoxyadenosine + 2 L-methionine + 2 reduced [2Fe-2S]-[ferredoxin]. Its pathway is protein modification; protein lipoylation via endogenous pathway; protein N(6)-(lipoyl)lysine from octanoyl-[acyl-carrier-protein]: step 2/2. Its function is as follows. Catalyzes the radical-mediated insertion of two sulfur atoms into the C-6 and C-8 positions of the octanoyl moiety bound to the lipoyl domains of lipoate-dependent enzymes, thereby converting the octanoylated domains into lipoylated derivatives. This is Lipoyl synthase from Enterobacter sp. (strain 638).